A 317-amino-acid chain; its full sequence is 2,3-dihydroxyphenylpropionate/2,3-dihydroxicinnamic acid 1,2-dioxygenase 2 (317 aa).

His115 (proton donor) is an active-site residue. His179 functions as the Proton acceptor in the catalytic mechanism.

The protein belongs to the LigB/MhpB extradiol dioxygenase family. In terms of assembly, homotetramer. Fe(2+) serves as cofactor.

It carries out the reaction 3-(2,3-dihydroxyphenyl)propanoate + O2 = (2Z,4E)-2-hydroxy-6-oxonona-2,4-dienedioate + H(+). The catalysed reaction is (2E)-3-(2,3-dihydroxyphenyl)prop-2-enoate + O2 = (2Z,4E,7E)-2-hydroxy-6-oxonona-2,4,7-trienedioate + H(+). The protein operates within aromatic compound metabolism; 3-phenylpropanoate degradation. In terms of biological role, catalyzes the non-heme iron(II)-dependent oxidative cleavage of 2,3-dihydroxyphenylpropionic acid and 2,3-dihydroxicinnamic acid into 2-hydroxy-6-ketononadienedioate and 2-hydroxy-6-ketononatrienedioate, respectively. The protein is 2,3-dihydroxyphenylpropionate/2,3-dihydroxicinnamic acid 1,2-dioxygenase 2 of Dechloromonas aromatica (strain RCB).